Consider the following 741-residue polypeptide: Catalase-peroxidase 2 (741 aa).

Positions 1 to 28 (MQRNRIAKSVLAALAVIAMSAGSISARA) are cleaved as a signal peptide. Positions 107 to 228 (WHGAGTYRTY…LAATQMGLIY (122 aa)) form a cross-link, tryptophyl-tyrosyl-methioninium (Trp-Tyr) (with M-254). The active-site Proton acceptor is the His108. A cross-link (tryptophyl-tyrosyl-methioninium (Tyr-Met) (with W-107)) is located at residues 228-254 (YVNPEGPNGNPDPVAAAQDIREAFGRM). His269 is a binding site for heme b.

This sequence belongs to the peroxidase family. Peroxidase/catalase subfamily. As to quaternary structure, homodimer or homotetramer. It depends on heme b as a cofactor. Formation of the three residue Trp-Tyr-Met cross-link is important for the catalase, but not the peroxidase activity of the enzyme.

The catalysed reaction is H2O2 + AH2 = A + 2 H2O. The enzyme catalyses 2 H2O2 = O2 + 2 H2O. Its function is as follows. Bifunctional enzyme with both catalase and broad-spectrum peroxidase activity. The polypeptide is Catalase-peroxidase 2 (Burkholderia vietnamiensis (strain G4 / LMG 22486) (Burkholderia cepacia (strain R1808))).